The following is a 424-amino-acid chain: 3-phosphoshikimate 1-carboxyvinyltransferase (424 aa).

3 residues coordinate 3-phosphoshikimate: lysine 21, serine 22, and arginine 26. Lysine 21 lines the phosphoenolpyruvate pocket. Phosphoenolpyruvate contacts are provided by glycine 91 and arginine 119. Residues serine 164, glutamine 166, aspartate 310, and lysine 337 each coordinate 3-phosphoshikimate. Glutamine 166 is a binding site for phosphoenolpyruvate. Aspartate 310 (proton acceptor) is an active-site residue. Arginine 341 and arginine 382 together coordinate phosphoenolpyruvate.

Belongs to the EPSP synthase family. In terms of assembly, monomer.

Its subcellular location is the cytoplasm. The enzyme catalyses 3-phosphoshikimate + phosphoenolpyruvate = 5-O-(1-carboxyvinyl)-3-phosphoshikimate + phosphate. Its pathway is metabolic intermediate biosynthesis; chorismate biosynthesis; chorismate from D-erythrose 4-phosphate and phosphoenolpyruvate: step 6/7. In terms of biological role, catalyzes the transfer of the enolpyruvyl moiety of phosphoenolpyruvate (PEP) to the 5-hydroxyl of shikimate-3-phosphate (S3P) to produce enolpyruvyl shikimate-3-phosphate and inorganic phosphate. The polypeptide is 3-phosphoshikimate 1-carboxyvinyltransferase (Campylobacter curvus (strain 525.92)).